Reading from the N-terminus, the 376-residue chain is Cyclin-dependent kinase 9-B (376 aa).

The region spanning 19 to 319 (YERLAKIGQG…SDEALNHDFF (301 aa)) is the Protein kinase domain. Residues 25 to 33 (IGQGTFGEV) and Lys48 each bind ATP. The Proton acceptor role is filled by Asp153. Residues 345–376 (PPRRRGGHMPQQPANQARNPAATNQSEFDRVF) are disordered. Residues 354 to 369 (PQQPANQARNPAATNQ) show a composition bias toward low complexity.

Belongs to the protein kinase superfamily. CMGC Ser/Thr protein kinase family. CDC2/CDKX subfamily. As to quaternary structure, associates with cyclin-T to form P-TEFb.

Its subcellular location is the nucleus. The enzyme catalyses L-seryl-[protein] + ATP = O-phospho-L-seryl-[protein] + ADP + H(+). The catalysed reaction is L-threonyl-[protein] + ATP = O-phospho-L-threonyl-[protein] + ADP + H(+). It carries out the reaction [DNA-directed RNA polymerase] + ATP = phospho-[DNA-directed RNA polymerase] + ADP + H(+). Functionally, member of the cyclin-dependent kinase pair (CDK9/cyclin-T) complex, also called positive transcription elongation factor B (P-TEFb), which is proposed to facilitate the transition from abortive to production elongation by phosphorylating the CTD (C-terminal domain) of the large subunit of RNA polymerase II (RNAP II) and SUPT5H. The chain is Cyclin-dependent kinase 9-B (cdk9-b) from Xenopus laevis (African clawed frog).